Reading from the N-terminus, the 257-residue chain is MVLIRVLANLLILQLSYAQKSSELVIGGDECNINEHPFLVLVYYDDYQCGGTLINEEWVLTAAHCNGENMEIYLGMHSKKVPNKDRRRRVPKEKFFCDSSKTYTKWNKDIMLIRLDRPVRKSAHIAPLSLPSSPPSVGSVCRVMGWGTITSPQVTLPDVPRCANINLLDYEVCRAAYPELPATSRTLCAGILEGGKDSCGGDSGGPLICNGQFQGIVSWGGDPCAQPHEPGLYTNVFDHLDWIKGFIAGNTDVTCPP.

The N-terminal stretch at 1–18 (MVLIRVLANLLILQLSYA) is a signal peptide. Residues 19–24 (QKSSEL) constitute a propeptide that is removed on maturation. One can recognise a Peptidase S1 domain in the interval 25–248 (VIGGDECNIN…HLDWIKGFIA (224 aa)). 6 disulfides stabilise this stretch: cysteine 31/cysteine 162, cysteine 49/cysteine 65, cysteine 97/cysteine 255, cysteine 141/cysteine 209, cysteine 173/cysteine 188, and cysteine 199/cysteine 224. Residues histidine 64 and aspartate 109 each act as charge relay system in the active site. Residue serine 203 is the Charge relay system of the active site.

Belongs to the peptidase S1 family. Snake venom subfamily. Monomer. Expressed by the venom gland.

The protein localises to the secreted. In terms of biological role, snake venom serine protease with fibrinogenolytic activities. Cleaves beta-chain of fibrinogen (FGB) efficiently and shows relatively lower activity on alpha-chain. This chain is Beta-fibrinogenase mucrofibrase-4, found in Protobothrops mucrosquamatus (Taiwan habu).